Consider the following 231-residue polypeptide: uncharacterized protein (231 aa).

A Response regulatory domain is found at 4-116 (RILVVEDDED…ELHARVIAQL (113 aa)). Asp52 carries the 4-aspartylphosphate modification. Positions 129-230 (EETFLIGGKL…EWGRGYRFGA (102 aa)) form a DNA-binding region, ompR/PhoB-type.

Post-translationally, phosphorylated by YrkQ.

The protein localises to the cytoplasm. Its function is as follows. Member of the two-component regulatory system YrkQ/YrkP. This is an uncharacterized protein from Bacillus subtilis (strain 168).